Here is a 118-residue protein sequence, read N- to C-terminus: D-dopachrome decarboxylase (118 aa).

Position 2 is an N-acetylproline (Pro-2). Lys-33 is modified (N6-acetyllysine).

The protein belongs to the MIF family. As to quaternary structure, homotrimer.

The protein resides in the cytoplasm. It carries out the reaction D-dopachrome + H(+) = 5,6-dihydroxyindole + CO2. Functionally, tautomerization of D-dopachrome with decarboxylation to give 5,6-dihydroxyindole (DHI). The polypeptide is D-dopachrome decarboxylase (DDT) (Bos taurus (Bovine)).